Consider the following 150-residue polypeptide: UPF0178 protein BceJ2315_16760 (150 aa).

This sequence belongs to the UPF0178 family.

This Burkholderia cenocepacia (strain ATCC BAA-245 / DSM 16553 / LMG 16656 / NCTC 13227 / J2315 / CF5610) (Burkholderia cepacia (strain J2315)) protein is UPF0178 protein BceJ2315_16760.